Here is a 243-residue protein sequence, read N- to C-terminus: Orotidine 5'-phosphate decarboxylase (243 aa).

Substrate-binding positions include Asp-18, Lys-39, 66–75 (DLKFHDIPTT), Thr-130, Arg-192, Gln-201, Gly-221, and Arg-222. Lys-68 functions as the Proton donor in the catalytic mechanism.

Belongs to the OMP decarboxylase family. Type 1 subfamily. As to quaternary structure, homodimer.

It carries out the reaction orotidine 5'-phosphate + H(+) = UMP + CO2. Its pathway is pyrimidine metabolism; UMP biosynthesis via de novo pathway; UMP from orotate: step 2/2. Catalyzes the decarboxylation of orotidine 5'-monophosphate (OMP) to uridine 5'-monophosphate (UMP). The protein is Orotidine 5'-phosphate decarboxylase of Synechococcus sp. (strain CC9311).